A 239-amino-acid chain; its full sequence is Uridylate kinase (239 aa).

13–16 lines the ATP pocket; that stretch reads KLSG. Glycine 55 contributes to the UMP binding site. Residues glycine 56 and arginine 60 each contribute to the ATP site. UMP is bound by residues aspartate 75 and 136–143; that span reads TGNPFFTT. Positions 163, 164, 169, and 172 each coordinate ATP.

Belongs to the UMP kinase family. As to quaternary structure, homohexamer.

It localises to the cytoplasm. The catalysed reaction is UMP + ATP = UDP + ADP. It functions in the pathway pyrimidine metabolism; CTP biosynthesis via de novo pathway; UDP from UMP (UMPK route): step 1/1. Inhibited by UTP. In terms of biological role, catalyzes the reversible phosphorylation of UMP to UDP. This Neisseria gonorrhoeae (strain ATCC 700825 / FA 1090) protein is Uridylate kinase.